The following is a 353-amino-acid chain: Dihydroorotate dehydrogenase (quinone) (353 aa).

Residues 66 to 70 (AGFDK) and Thr-90 each bind FMN. Lys-70 is a binding site for substrate. 115–119 (NRMGF) is a substrate binding site. Residues Asn-143 and Asn-176 each contribute to the FMN site. Asn-176 provides a ligand contact to substrate. Ser-179 acts as the Nucleophile in catalysis. Residue Asn-181 participates in substrate binding. Lys-212 and Thr-240 together coordinate FMN. 241–242 (NT) contacts substrate. Residues Gly-264, Gly-293, and 314–315 (YT) contribute to the FMN site.

It belongs to the dihydroorotate dehydrogenase family. Type 2 subfamily. As to quaternary structure, monomer. Requires FMN as cofactor.

The protein localises to the cell membrane. The enzyme catalyses (S)-dihydroorotate + a quinone = orotate + a quinol. It functions in the pathway pyrimidine metabolism; UMP biosynthesis via de novo pathway; orotate from (S)-dihydroorotate (quinone route): step 1/1. Functionally, catalyzes the conversion of dihydroorotate to orotate with quinone as electron acceptor. This Mycolicibacterium vanbaalenii (strain DSM 7251 / JCM 13017 / BCRC 16820 / KCTC 9966 / NRRL B-24157 / PYR-1) (Mycobacterium vanbaalenii) protein is Dihydroorotate dehydrogenase (quinone).